Reading from the N-terminus, the 290-residue chain is NAD kinase (290 aa).

D72 acts as the Proton acceptor in catalysis. NAD(+)-binding positions include 72–73 (DG), K77, 145–146 (NE), D175, 186–191 (TAYSLS), and A210.

This sequence belongs to the NAD kinase family. A divalent metal cation serves as cofactor.

It localises to the cytoplasm. It catalyses the reaction NAD(+) + ATP = ADP + NADP(+) + H(+). Involved in the regulation of the intracellular balance of NAD and NADP, and is a key enzyme in the biosynthesis of NADP. Catalyzes specifically the phosphorylation on 2'-hydroxyl of the adenosine moiety of NAD to yield NADP. The chain is NAD kinase from Bacteroides fragilis (strain YCH46).